Here is a 106-residue protein sequence, read N- to C-terminus: uncharacterized protein (106 aa).

The chain crosses the membrane as a helical span at residues 9–27 (ALAALAFTLGLIGLAAWAL). Positions 84-106 (TPKGPPPASALSPSPVAEPEPVV) are disordered.

It belongs to the FliO/MopB family.

Its subcellular location is the cell membrane. It is found in the bacterial flagellum basal body. This is an uncharacterized protein from Caulobacter vibrioides (strain ATCC 19089 / CIP 103742 / CB 15) (Caulobacter crescentus).